The primary structure comprises 1412 residues: DNA-directed RNA polymerase subunit beta' (1412 aa).

Zn(2+) contacts are provided by C70, C72, C85, and C88. Residues D458, D460, and D462 each coordinate Mg(2+). Residues C813, C887, C894, and C897 each coordinate Zn(2+). Residues 1388 to 1412 (EQALLTPATTAEAVVGEEPAPPPAQ) form a disordered region. Over residues 1393–1405 (TPATTAEAVVGEE) the composition is skewed to low complexity.

This sequence belongs to the RNA polymerase beta' chain family. As to quaternary structure, the RNAP catalytic core consists of 2 alpha, 1 beta, 1 beta' and 1 omega subunit. When a sigma factor is associated with the core the holoenzyme is formed, which can initiate transcription. Mg(2+) serves as cofactor. The cofactor is Zn(2+).

The catalysed reaction is RNA(n) + a ribonucleoside 5'-triphosphate = RNA(n+1) + diphosphate. DNA-dependent RNA polymerase catalyzes the transcription of DNA into RNA using the four ribonucleoside triphosphates as substrates. This is DNA-directed RNA polymerase subunit beta' from Methylibium petroleiphilum (strain ATCC BAA-1232 / LMG 22953 / PM1).